A 459-amino-acid polypeptide reads, in one-letter code: Trigger factor (459 aa).

One can recognise a PPIase FKBP-type domain in the interval 166–245 (GDFANIDLTA…VNSVKAEELP (80 aa)).

The protein belongs to the FKBP-type PPIase family. Tig subfamily.

It localises to the cytoplasm. It catalyses the reaction [protein]-peptidylproline (omega=180) = [protein]-peptidylproline (omega=0). Involved in protein export. Acts as a chaperone by maintaining the newly synthesized protein in an open conformation. Functions as a peptidyl-prolyl cis-trans isomerase. This Bifidobacterium longum (strain DJO10A) protein is Trigger factor.